Consider the following 252-residue polypeptide: Urease accessory protein UreD (252 aa).

Belongs to the UreD family. As to quaternary structure, ureD, UreF and UreG form a complex that acts as a GTP-hydrolysis-dependent molecular chaperone, activating the urease apoprotein by helping to assemble the nickel containing metallocenter of UreC. The UreE protein probably delivers the nickel.

It is found in the cytoplasm. Required for maturation of urease via the functional incorporation of the urease nickel metallocenter. The polypeptide is Urease accessory protein UreD (Streptomyces avermitilis (strain ATCC 31267 / DSM 46492 / JCM 5070 / NBRC 14893 / NCIMB 12804 / NRRL 8165 / MA-4680)).